We begin with the raw amino-acid sequence, 65 residues long: Trypsin inhibitor 1 (65 aa).

Disulfide bonds link cysteine 39–cysteine 56, cysteine 46–cysteine 58, and cysteine 52–cysteine 64.

Belongs to the protease inhibitor I7 (squash-type serine protease inhibitor) family.

Its subcellular location is the secreted. Its function is as follows. Inhibits trypsin. The sequence is that of Trypsin inhibitor 1 from Trichosanthes kirilowii (Chinese snake gourd).